Here is a 482-residue protein sequence, read N- to C-terminus: UDP-glycosyltransferase 1 (482 aa).

Asn243 carries N-linked (GlcNAc...) asparagine glycosylation. Residues 450 to 470 form a helical membrane-spanning segment; sequence IYLVYALVLGSAWWIGKTILG.

It belongs to the glycosyltransferase 28 family.

It is found in the membrane. It carries out the reaction exophillate aglycone + UDP-alpha-D-glucose = exophillate + UDP + H(+). Its pathway is secondary metabolite biosynthesis. Its function is as follows. Acts as a depside 2-O-glucosyltransferase that catalyzes the first glycosylation step during phaeomoniecin D biosynthesis by producing the intermediate exophillic acid which is further O-galactosylated into phaeomoniecin D by the C-galactosyltransferase OGT2. This chain is UDP-glycosyltransferase 1, found in Phaeomoniella chlamydospora (Phaeoacremonium chlamydosporum).